Reading from the N-terminus, the 627-residue chain is 1-deoxy-D-xylulose-5-phosphate synthase (627 aa).

Thiamine diphosphate contacts are provided by residues histidine 72 and 113-115 (GHS). Aspartate 144 serves as a coordination point for Mg(2+). Residues 145-146 (GA), asparagine 173, tyrosine 283, and glutamate 366 each bind thiamine diphosphate. Asparagine 173 contacts Mg(2+).

The protein belongs to the transketolase family. DXPS subfamily. In terms of assembly, homodimer. Mg(2+) is required as a cofactor. Requires thiamine diphosphate as cofactor.

The enzyme catalyses D-glyceraldehyde 3-phosphate + pyruvate + H(+) = 1-deoxy-D-xylulose 5-phosphate + CO2. It functions in the pathway metabolic intermediate biosynthesis; 1-deoxy-D-xylulose 5-phosphate biosynthesis; 1-deoxy-D-xylulose 5-phosphate from D-glyceraldehyde 3-phosphate and pyruvate: step 1/1. In terms of biological role, catalyzes the acyloin condensation reaction between C atoms 2 and 3 of pyruvate and glyceraldehyde 3-phosphate to yield 1-deoxy-D-xylulose-5-phosphate (DXP). This is 1-deoxy-D-xylulose-5-phosphate synthase from Macrococcus caseolyticus (strain JCSC5402) (Macrococcoides caseolyticum).